Here is an 89-residue protein sequence, read N- to C-terminus: DNA/RNA-binding protein Alba 2 (89 aa).

At Lys-12 the chain carries N6-acetyllysine. The Zn(2+) site is built by Lys-14, Asp-18, and Asp-22.

It belongs to the histone-like Alba family. As to quaternary structure, forms homodimers and homotetramers. Homodimer at pH below 6.0. Forms homotetramers and higher order homooligomers at near the growth temperature of 80 degrees Celsius and pH 7.0. Interacts with Alba 1; heterodimers lack cooperative DNA-binding behavior and result in more compact chromatin structures compared to Alba 1 homodimers. Post-translationally, acetylated. Acetylation at Lys-12 decreases DNA-binding affinity.

It localises to the cytoplasm. It is found in the chromosome. In terms of biological role, binds single-stranded DNA, RNA and double-stranded DNA. Involved in DNA compaction. In Saccharolobus solfataricus (strain ATCC 35092 / DSM 1617 / JCM 11322 / P2) (Sulfolobus solfataricus), this protein is DNA/RNA-binding protein Alba 2.